A 155-amino-acid chain; its full sequence is MHYMGLFSRAGNIFRQPRALQASNAMLQGNLSLTPSKIFVGGLSPSTDVELLKEAFGSFGKIVDAVVVLDRESGLSRGFGFVTYDSIEVANNAMQAMQNKELDGRIIGVHPADSGGGGGGGGFARRGGYGGGRGGYARGGFGRGGFGGGGYGFVR.

The N-terminal 27 residues, 1 to 27 (MHYMGLFSRAGNIFRQPRALQASNAML), are a transit peptide targeting the mitochondrion. In terms of domain architecture, RRM spans 36 to 114 (SKIFVGGLSP…RIIGVHPADS (79 aa)).

Belongs to the GR-RBP family. As to quaternary structure, component of the mitochondrial ribosome small subunit.

It is found in the mitochondrion. In terms of biological role, possibly has a role in RNA transcription or processing during stress. In Arabidopsis thaliana (Mouse-ear cress), this protein is Small ribosomal subunit protein mS86 (RBG6).